The chain runs to 252 residues: Trans-aconitate 2-methyltransferase (252 aa).

It belongs to the methyltransferase superfamily. Tam family.

It localises to the cytoplasm. It carries out the reaction trans-aconitate + S-adenosyl-L-methionine = (E)-3-(methoxycarbonyl)pent-2-enedioate + S-adenosyl-L-homocysteine. Its function is as follows. Catalyzes the S-adenosylmethionine monomethyl esterification of trans-aconitate. The sequence is that of Trans-aconitate 2-methyltransferase from Escherichia coli O9:H4 (strain HS).